Consider the following 22-residue polypeptide: Melittin-related peptide FQ-22-1 (22 aa).

Q22 carries the glutamine amide modification.

As to expression, expressed by the skin glands.

It is found in the secreted. The sequence is that of Melittin-related peptide FQ-22-1 from Rana arvalis (Moor frog).